A 631-amino-acid chain; its full sequence is Beta-galactosidase-1-like protein 3 (631 aa).

Residue glutamate 203 is the Proton donor of the active site. Glutamate 277 serves as the catalytic Nucleophile.

The protein belongs to the glycosyl hydrolase 35 family.

The polypeptide is Beta-galactosidase-1-like protein 3 (Glb1l3) (Rattus norvegicus (Rat)).